A 261-amino-acid polypeptide reads, in one-letter code: Cytochrome c oxidase subunit 3 (261 aa).

At 1-15 (MTHQTHAYHMVNPSP) the chain is on the mitochondrial matrix side. Residues 16–34 (WPLTGALSALLMTSGLTMW) traverse the membrane as a helical segment. Topologically, residues 35 to 40 (FHFNST) are mitochondrial intermembrane. The helical transmembrane segment at 41–66 (ILLMLGLTTNMLTMYQWWRDIIREST) threads the bilayer. Residues 67 to 72 (FQGHHT) are Mitochondrial matrix-facing. A helical transmembrane segment spans residues 73-105 (PVVQKGLRYGMILFIISEVLFFTGFFWAFYHSS). The Mitochondrial intermembrane portion of the chain corresponds to 106 to 128 (LAPTPELGGCWPPTGIHPLNPLE). The chain crosses the membrane as a helical span at residues 129–152 (VPLLNTSVLLASGVSITWAHHSLM). Residues 153-155 (EGH) are Mitochondrial matrix-facing. A helical transmembrane segment spans residues 156–183 (RNHMLQALFITIALGVYFTLLQASEYYE). Residues 184 to 190 (APFTISD) lie on the Mitochondrial intermembrane side of the membrane. Residues 191 to 223 (GVYGSTFFVATGFHGLHVIIGSTFLIVCFFRQL) traverse the membrane as a helical segment. At 224 to 232 (KFHFTSSHH) the chain is on the mitochondrial matrix side. The helical transmembrane segment at 233–256 (FGFEAAAWYWHFVDVVWLFLYVSI) threads the bilayer. At 257–261 (YWWGS) the chain is on the mitochondrial intermembrane side.

This sequence belongs to the cytochrome c oxidase subunit 3 family. As to quaternary structure, component of the cytochrome c oxidase (complex IV, CIV), a multisubunit enzyme composed of 14 subunits. The complex is composed of a catalytic core of 3 subunits MT-CO1, MT-CO2 and MT-CO3, encoded in the mitochondrial DNA, and 11 supernumerary subunits COX4I, COX5A, COX5B, COX6A, COX6B, COX6C, COX7A, COX7B, COX7C, COX8 and NDUFA4, which are encoded in the nuclear genome. The complex exists as a monomer or a dimer and forms supercomplexes (SCs) in the inner mitochondrial membrane with NADH-ubiquinone oxidoreductase (complex I, CI) and ubiquinol-cytochrome c oxidoreductase (cytochrome b-c1 complex, complex III, CIII), resulting in different assemblies (supercomplex SCI(1)III(2)IV(1) and megacomplex MCI(2)III(2)IV(2)).

It is found in the mitochondrion inner membrane. It carries out the reaction 4 Fe(II)-[cytochrome c] + O2 + 8 H(+)(in) = 4 Fe(III)-[cytochrome c] + 2 H2O + 4 H(+)(out). In terms of biological role, component of the cytochrome c oxidase, the last enzyme in the mitochondrial electron transport chain which drives oxidative phosphorylation. The respiratory chain contains 3 multisubunit complexes succinate dehydrogenase (complex II, CII), ubiquinol-cytochrome c oxidoreductase (cytochrome b-c1 complex, complex III, CIII) and cytochrome c oxidase (complex IV, CIV), that cooperate to transfer electrons derived from NADH and succinate to molecular oxygen, creating an electrochemical gradient over the inner membrane that drives transmembrane transport and the ATP synthase. Cytochrome c oxidase is the component of the respiratory chain that catalyzes the reduction of oxygen to water. Electrons originating from reduced cytochrome c in the intermembrane space (IMS) are transferred via the dinuclear copper A center (CU(A)) of subunit 2 and heme A of subunit 1 to the active site in subunit 1, a binuclear center (BNC) formed by heme A3 and copper B (CU(B)). The BNC reduces molecular oxygen to 2 water molecules using 4 electrons from cytochrome c in the IMS and 4 protons from the mitochondrial matrix. In Tragelaphus strepsiceros (Greater kudu), this protein is Cytochrome c oxidase subunit 3 (MT-CO3).